Consider the following 337-residue polypeptide: Transaldolase (337 aa).

The Nuclear localization signal motif lies at 1-10 (MSGSPVKRQR). K115 carries the post-translational modification N6-acetyllysine. K142 functions as the Schiff-base intermediate with substrate in the catalytic mechanism. An N6-acetyllysine modification is found at K219. A phosphoserine mark is found at S237 and S256. 3 positions are modified to N6-acetyllysine: K269, K286, and K321.

It belongs to the transaldolase family. Type 1 subfamily. Homodimer. Interacts with KPNA1 and KPNA4.

The protein localises to the nucleus. It localises to the cytoplasm. It carries out the reaction D-sedoheptulose 7-phosphate + D-glyceraldehyde 3-phosphate = D-erythrose 4-phosphate + beta-D-fructose 6-phosphate. Its pathway is carbohydrate degradation; pentose phosphate pathway; D-glyceraldehyde 3-phosphate and beta-D-fructose 6-phosphate from D-ribose 5-phosphate and D-xylulose 5-phosphate (non-oxidative stage): step 2/3. Functionally, catalyzes the rate-limiting step of the non-oxidative phase in the pentose phosphate pathway. Catalyzes the reversible conversion of sedheptulose-7-phosphate and D-glyceraldehyde 3-phosphate into erythrose-4-phosphate and beta-D-fructose 6-phosphate. The chain is Transaldolase (Taldo1) from Rattus norvegicus (Rat).